Consider the following 221-residue polypeptide: Protein DEHYDRATION-INDUCED 19 homolog 2 (221 aa).

2 disordered regions span residues 1–24 (MEDD…TAAK) and 162–193 (VLPD…SDSD).

This sequence belongs to the Di19 family. Not phosphorylated in vitro by CPK3 or CPK11. In terms of tissue distribution, expressed in seedlings, roots, leaves, stems, flowers and siliques.

It is found in the cytoplasm. The protein resides in the nucleus. The sequence is that of Protein DEHYDRATION-INDUCED 19 homolog 2 (DI19-2) from Arabidopsis thaliana (Mouse-ear cress).